The chain runs to 98 residues: MPSISTNIVLAFITALLGMLIFRSHLMSSLLCLEGMMLSMFILSTLTILNLHFTTSFMMPILLLVFAACEAAVGLALLVTVSNTYGLDYIQNLNLLQC.

3 consecutive transmembrane segments (helical) span residues 2 to 22 (PSIS…MLIF), 29 to 49 (SLLC…LTIL), and 61 to 81 (ILLL…LVTV).

The protein belongs to the complex I subunit 4L family. Core subunit of respiratory chain NADH dehydrogenase (Complex I) which is composed of 45 different subunits.

It localises to the mitochondrion inner membrane. It catalyses the reaction a ubiquinone + NADH + 5 H(+)(in) = a ubiquinol + NAD(+) + 4 H(+)(out). Functionally, core subunit of the mitochondrial membrane respiratory chain NADH dehydrogenase (Complex I) which catalyzes electron transfer from NADH through the respiratory chain, using ubiquinone as an electron acceptor. Part of the enzyme membrane arm which is embedded in the lipid bilayer and involved in proton translocation. The chain is NADH-ubiquinone oxidoreductase chain 4L (MT-ND4L) from Eulemur rubriventer (Red-bellied lemur).